Reading from the N-terminus, the 1067-residue chain is MDIFHKSYNVILSPPKVQQADETISKLCDRLEHATLFEDRKAAALGIKSFAREFKELVAAHGLKGIIQSLHRDYDDPELLKVTLETCLILTRHDDDSRASDTGLWIADQFILNQDNIQCLLQSISHKDFYVRLYSVELFSAILSCRPTELKDCLQTFPSAISSIMVPLRDSIEPVRNADLYFLSELVKDCTSIQKLVVFENAFETLFSLLENEGGVDGGIIALEALKFLNVLLKDNISNQNYFRESNHIPSLLKLLSVDTFVDGTWDTSRVQCVIEALYALQSLVPIGLSSSIANQNAVVSNHGIDVLLTLATHPDLLFFDVQKISWITLAHVVYSNARAQNSFVDSTFFDIKNTDVLTCLFDYLFLSSISPSHRYSVAFFLRSLTSENDELSSKFLKQIIHAYTHKQDNRLNIIQGYLDLVHLSDQDQYDNWFTSTILTYLVIDNDQRKYLLCSIPLFQDMDNDEDSESEDKVTFIQCVSTKLIATLRHENALQNCVGYLTLLIALVYGNPDSVKDFLSESSILQTFLTALMDESSSANSVIQGMIAVFLSLVYYYCPIESPVSKSDVYNAITSAVKRDVFINRLQRLRRMNLYEITFLSMKQKMHAIDDAADAFNTKIGEINTLDAFDEAQKQLKSLREEIDNTKEALDLSVKERSIQEEKLNESLKTSKTNLEEQTQLAEKYHEELLDNQQKLYDLRIELDYTKSNCKQMEEEMQVLREGHESEIKDFIEEHSKLTKQLDDIKNQFGIISSKNRDLLSELEKSKSLNNSLAALESKNKKLENDLNLLTEKLNKKNADTESFKNTIREAELSKKALNDNLGNKENIISDLKNKLSEESTRLQELQSQLNQDKNQIETLNERISAAADELSSMESINKNQANELKLAKQKCSNLQEKINFGNKLAKEHTEKISSLEKDLEAATKTASTLSKELKTVKSENDSLKSVSNDDQNKEKSVNNEKFKEVSQALAEANEKLNARDEEIERLKVDIIGLQNASLNMQSLKDSDNRTISDLESKNKELEKKLKEADEYWLLIVEELESKRTKDKELLRQCGQAVSEDEQSEEE.

ARM repeat units lie at residues 51–92 (AREF…ILTR), 105–144 (WIAD…AILS), 148–188 (TELK…ELVK), 191–234 (TSIQ…VLLK), 237–285 (ISNQ…QSLV), 287–313 (IGLS…TLAT), 343–366 (SFVD…DYLF), 367–405 (LSSI…HAYT), 407–446 (KQDN…VIDN), 484–513 (LIAT…GNPD), 514–555 (SVKD…SLVY), 648–688 (EALD…YHEE), 770–810 (NNSL…TIRE), and 830–873 (SDLK…ELSS). A coiled-coil region spans residues 623–1034 (INTLDAFDEA…KLKEADEYWL (412 aa)). Basic and acidic residues-rich tracts occupy residues 934–943 (LKTVKSENDS) and 951–962 (DQNKEKSVNNEK). Residues 934 to 962 (LKTVKSENDSLKSVSNDDQNKEKSVNNEK) are disordered. An ARM 15 repeat occupies 958–997 (VNNEKFKEVSQALAEANEKLNARDEEIERLKVDIIGLQNA).

This sequence belongs to the VDP/USO1/EDE1 family.

It is found in the cytoplasm. It localises to the cytoskeleton. The protein resides in the cytoplasmic vesicle membrane. The protein localises to the endoplasmic reticulum membrane. Its subcellular location is the golgi apparatus membrane. Required for protein transport from the ER to the Golgi complex. The protein is Intracellular protein transport protein uso1 (uso1) of Schizosaccharomyces pombe (strain 972 / ATCC 24843) (Fission yeast).